Reading from the N-terminus, the 48-residue chain is Sperm protamine P1 (48 aa).

It belongs to the protamine P1 family. Testis.

Its subcellular location is the nucleus. It is found in the chromosome. Functionally, protamines substitute for histones in the chromatin of sperm during the haploid phase of spermatogenesis. They compact sperm DNA into a highly condensed, stable and inactive complex. This chain is Sperm protamine P1 (PRM1), found in Eptesicus fuscus (Big brown bat).